The primary structure comprises 808 residues: Putative minor structural protein VP5 (808 aa).

It localises to the virion. The protein is Putative minor structural protein VP5 of Rice ragged stunt virus (isolate Thailand) (RRSV).